A 318-amino-acid chain; its full sequence is D-alanine--D-alanine ligase (318 aa).

An ATP-grasp domain is found at 116–311; that stretch reads KQVWQSLGIP…FQQLVLAILA (196 aa). 142 to 197 is an ATP binding site; it reads SAELGFPLIVKPAHEGSSIGMAKVNSEQELVAAWKDAAKYDSQVLVEQWIHGPEFT. Asp265, Glu278, and Asn280 together coordinate Mg(2+).

The protein belongs to the D-alanine--D-alanine ligase family. Requires Mg(2+) as cofactor. The cofactor is Mn(2+).

The protein localises to the cytoplasm. It catalyses the reaction 2 D-alanine + ATP = D-alanyl-D-alanine + ADP + phosphate + H(+). It functions in the pathway cell wall biogenesis; peptidoglycan biosynthesis. Cell wall formation. The polypeptide is D-alanine--D-alanine ligase (Pseudomonas entomophila (strain L48)).